The chain runs to 294 residues: MSGDGLSNGPPPGARPDWTIDQGWETYTQAEHDVWITLYERQTDMLHGRACDEFMRGLDALDLHRSGIPDFARINEELKRLTGWTVVAVPGLVPDDVFFDHLANRRFPAGQFIRKPHELDYLQEPDIFHDVFGHVPMLTDPVFADYMQAYGEGGRRALGLGRLANLARLYWYTVEFGLMNTPAGLRIYGAGIVSSRTESIFALDDPSPNRIGFDLERVMRTLYRIDDFQQVYFVIDSIQTLQEVTLRDFGAIYERLASVSDIGVAEIVPGDAVLTRGTQAYATAGGRLAGAAAG.

A disordered region spans residues 1-20 (MSGDGLSNGPPPGARPDWTI). Residues H129, H134, and E175 each contribute to the Fe cation site.

Belongs to the biopterin-dependent aromatic amino acid hydroxylase family. Fe(2+) is required as a cofactor.

It carries out the reaction (6R)-L-erythro-5,6,7,8-tetrahydrobiopterin + L-phenylalanine + O2 = (4aS,6R)-4a-hydroxy-L-erythro-5,6,7,8-tetrahydrobiopterin + L-tyrosine. It participates in amino-acid degradation; L-phenylalanine degradation; acetoacetate and fumarate from L-phenylalanine: step 1/6. This chain is Phenylalanine-4-hydroxylase (phhA), found in Caulobacter vibrioides (strain ATCC 19089 / CIP 103742 / CB 15) (Caulobacter crescentus).